A 350-amino-acid chain; its full sequence is Renin receptor (350 aa).

The first 17 residues, 1–17, serve as a signal peptide directing secretion; it reads MAVLVVLLSSLVSSALA. Topologically, residues 18 to 302 are extracellular; that stretch reads NEFSILRSPG…YNLAYKYNLE (285 aa). The helical transmembrane segment at 303 to 323 threads the bilayer; the sequence is YSVVFNLVLWIMTGLALAVII. The Cytoplasmic segment spans residues 324–350; that stretch reads TSYNIWNMDPGYDSIIYRMTNQKIRMD. The short motif at 346–350 is the Mediates retrograde transport to the ER element; that stretch reads KIRMD.

As to quaternary structure, interacts with renin. Accessory component of the multisubunit proton-transporting vacuolar (V)-ATPase protein pump. Interacts (via N-terminus) with ATP6AP1 (via N-terminus). Interacts with ATP6V0D1; ATP6V0D1 is a V-ATPase complex subunit and the interaction promotes V-ATPase complex assembly. Interacts with TMEM9; TMEM9 is a V-ATPase assembly regulator and the interaction induces the interaction with ATP6V0D1. Interacts with VMA21 (via N-terminus); VMA21 is a V-ATPase accessory component. Post-translationally, phosphorylated. Proteolytically cleaved by a furin-like convertase in the trans-Golgi network to generate N- and C-terminal fragments. As to expression, expressed in the brain.

It is found in the endoplasmic reticulum membrane. It localises to the lysosome membrane. Its subcellular location is the cytoplasmic vesicle. The protein resides in the autophagosome membrane. The protein localises to the cell projection. It is found in the dendritic spine membrane. It localises to the axon. Its subcellular location is the endosome membrane. The protein resides in the clathrin-coated vesicle membrane. The protein localises to the secretory vesicle. It is found in the synaptic vesicle membrane. Functionally, multifunctional protein which functions as a renin, prorenin cellular receptor and is involved in the assembly of the lysosomal proton-transporting V-type ATPase (V-ATPase) and the acidification of the endo-lysosomal system. May mediate renin-dependent cellular responses by activating ERK1 and ERK2. By increasing the catalytic efficiency of renin in AGT/angiotensinogen conversion to angiotensin I, may also play a role in the renin-angiotensin system (RAS). Through its function in V-type ATPase (v-ATPase) assembly and acidification of the lysosome it regulates protein degradation and may control different signaling pathways important for proper brain development, synapse morphology and synaptic transmission. The polypeptide is Renin receptor (Atp6ap2) (Rattus norvegicus (Rat)).